A 183-amino-acid polypeptide reads, in one-letter code: Probable apo-citrate lyase phosphoribosyl-dephospho-CoA transferase (183 aa).

The protein belongs to the CitX family.

It carries out the reaction apo-[citrate lyase ACP] + 2'-(5''-triphospho-alpha-D-ribosyl)-3'-dephospho-CoA = holo-[citrate lyase ACP] + diphosphate. Transfers 2-(5''-triphosphoribosyl)-3'-dephosphocoenzyme-A on a serine residue to the apo-acyl carrier protein (gamma chain) of the citrate lyase to yield holo-acyl carrier protein. The protein is Probable apo-citrate lyase phosphoribosyl-dephospho-CoA transferase of Escherichia coli (strain 55989 / EAEC).